The primary structure comprises 422 residues: Protein phosphatase methylesterase 1 (422 aa).

The interval 1-27 (MSDMFRKSVLNKLPHLPPTRAPWADES) is disordered. Active-site residues include Ser207, Asp234, and His371.

The protein belongs to the AB hydrolase superfamily.

The enzyme catalyses [phosphatase 2A protein]-C-terminal L-leucine methyl ester + H2O = [phosphatase 2A protein]-C-terminal L-leucine + methanol + H(+). Functionally, demethylates proteins that have been reversibly carboxymethylated. Demethylates the phosphatase PP2A catalytic subunit. This chain is Protein phosphatase methylesterase 1 (PPE1), found in Cryptococcus neoformans var. neoformans serotype D (strain JEC21 / ATCC MYA-565) (Filobasidiella neoformans).